Here is a 313-residue protein sequence, read N- to C-terminus: Adhesin MafA 1/2 (313 aa).

The signal sequence occupies residues 1–14 (MKTLLLLIPLVLTA). Cys-15 carries the N-palmitoyl cysteine lipid modification. Cys-15 carries S-diacylglycerol cysteine lipidation. Positions 282 to 298 (GDTTAQNRPDFKQNNGK) are enriched in polar residues. Positions 282–313 (GDTTAQNRPDFKQNNGKNPDVGNEVIRRRKGG) are disordered.

The protein belongs to the MafA family.

The protein resides in the cell outer membrane. This is Adhesin MafA 1/2 (mafA1) from Neisseria meningitidis serogroup C (strain 053442).